Here is a 236-residue protein sequence, read N- to C-terminus: Small ribosomal subunit protein uS2c (236 aa).

This sequence belongs to the universal ribosomal protein uS2 family.

It is found in the plastid. It localises to the chloroplast. The sequence is that of Small ribosomal subunit protein uS2c (rps2) from Morus indica (Mulberry).